The sequence spans 415 residues: MEKMNITDQAHDAFVKAHPQGDLLQLTQWAETKTLTGWYSRRIAVGEDDEIVGVAQLLFKKVPKLPYTLCYISRGFVTDYSNKLALETLLEAAMQIAKEEKAYAIKIDPDVEVDKGADALSNLRALGFKHKGFKEGLSKDYIQPRMTMITPIEKTDVALIQSFERRNRSKVRLALKRGTTVERSNREGLKTFANLMQITGERDGFLTRDISYFENIYDALHPDGDAELFLVKLEPKPVLEDLRQELHELEDEKAKLADKKQDKKTLNKINDADNKIAKTQELIDEMVTLESTHPEGIYLSGALLMFAGKKSYYLYGASSNEYRNFLPNHHMQFAMMQYAREHGATSYDFGGTDNNPDKDSDHYGLWTFKKVWGTYLSEKIGEFDYVLNAPLYQIIENIKPKLTKAKIKLSRKLKK.

It belongs to the FemABX family.

The protein resides in the cytoplasm. It carries out the reaction beta-D-GlcNAc-(1-&gt;4)-Mur2Ac(oyl-L-Ala-D-isoglutaminyl-L-Lys-D-Ala-D-Ala)-di-trans,octa-cis-undecaprenyl diphosphate + glycyl-tRNA(Gly) = beta-D-GlcNAc-(1-&gt;4)-Mur2Ac(oyl-L-Ala-D-isoglutaminyl-L-Lys-(N(6)-Gly)-D-Ala-D-Ala)-di-trans,octa-cis-undecaprenyl diphosphate + tRNA(Gly) + H(+). Catalyzes the incorporation of amino acid(s) into the interchain peptide bridge of peptidoglycan, using aminoacyl-tRNA as amino acid donor. This chain is Lipid II:glycine glycyltransferase (femX), found in Staphylococcus saprophyticus subsp. saprophyticus (strain ATCC 15305 / DSM 20229 / NCIMB 8711 / NCTC 7292 / S-41).